Consider the following 486-residue polypeptide: G2/mitotic-specific cyclin-4 (486 aa).

Disordered stretches follow at residues 1–80 (MRSY…SSNK) and 105–126 (VLLNDDDDETDDEFDDEEDKEN). Over residues 25–41 (ANLSSNHTTAGQPSTSS) the composition is skewed to polar residues. The span at 108–123 (NDDDDETDDEFDDEED) shows a compositional bias: acidic residues. Residues 122 to 184 (EDKENRYHDL…QSHTQDMRSI (63 aa)) are a coiled coil. Positions 234-359 (EIFNYLHELE…FMIDVLEFDL (126 aa)) constitute a Cyclin N-terminal domain.

This sequence belongs to the cyclin family. Cyclin AB subfamily. As to quaternary structure, interacts with IQG1.

Functionally, 2/mitotic-specific cyclin essential for the control of the cell cycle at the G2/M (mitosis) transition. G2/M cyclins accumulate steadily during G2 and are abruptly destroyed at mitosis. Degradation is necessary for the cell to exit from mitosis. Plays a role in morphogenesis by negatively regulating polarized growth. Through binding to CDC28 regulates cytokinesis, partly by phosphorylation of the actomyosin ring component IQG1. This is G2/mitotic-specific cyclin-4 (CLB4) from Candida albicans (strain SC5314 / ATCC MYA-2876) (Yeast).